An 805-amino-acid chain; its full sequence is Transcription factor SFL1 (805 aa).

The span at 1–24 (MSHLVSSSLGTTTTATPTSRSPHT) shows a compositional bias: low complexity. A disordered region spans residues 1-110 (MSHLVSSSLG…NNNVSNNNST (110 aa)). Residues 25-69 (NHSTPYNQNSITSNRSSPVPKNSVNSRIIPQTMNPPIDMKSNNIL) are compositionally biased toward polar residues. The span at 71–85 (PEKDTDTSRGDHSES) shows a compositional bias: basic and acidic residues. Residues 86 to 110 (KASSISSASGTTTTNNNNVSNNNST) are compositionally biased toward low complexity. Residues 117 to 226 (FIHKLYDMLH…LKNIKRRSSK (110 aa)) mediate DNA binding. 5 disordered regions span residues 273–336 (MQSP…NQSP), 438–483 (QSNF…VAPQ), 513–675 (REDS…PAPQ), 691–746 (HQKS…SENH), and 759–805 (VSEL…RKLE). The segment covering 295 to 310 (QQQQQQQQQQQQQQQQ) has biased composition (low complexity). Composition is skewed to polar residues over residues 454–480 (HGNS…NLNV) and 533–556 (PSRN…NFNP). Low complexity predominate over residues 557–566 (QQSQSQSQVQ). Composition is skewed to polar residues over residues 581 to 597 (ESTY…SQIL), 604 to 614 (VNHSPLVQQQQ), and 622 to 635 (NDSS…SSLP). Over residues 637 to 659 (TRPLSRQQQQQQQTLHHPSTTSS) the composition is skewed to low complexity. A compositionally biased stretch (polar residues) spans 716-738 (PISSTAPTTMITSTSKPTSTSGA).

This sequence belongs to the HSF family.

The protein localises to the nucleus. Functionally, transcription factor that plays a role of repressor of filamentous growth and flocculation. Antagonizes functions of SFL2 and FLO8. Plays a role in the hyphal repression induced by secreted factors like dodecanol by competitors such as Pseudomonas aeruginosa and Burkholderia cenocepacia. This Candida albicans (strain SC5314 / ATCC MYA-2876) (Yeast) protein is Transcription factor SFL1 (SFL1).